We begin with the raw amino-acid sequence, 175 residues long: MYLPKEKEIIQIKSYKHNGKLHRTWKKTVVLKSTENIIIGGNDHTLVVEADGRKWVTREPSICYFHSDYWFNVISMIREDGIYHYCNLGTPFAVDEQALKYIDYDLDIKVFPDGRFHLLDEGEYEQHRRQMKYPDSIDRILRHNVDVLSHWILDKKGPFSPDYIDIWYEKYKEYR.

Arginine 23 acts as the Proton donor in catalysis. Asparagine 87, aspartate 103, aspartate 105, aspartate 107, aspartate 120, and glutamate 123 together coordinate Mg(2+).

This sequence belongs to the Ntdp family. Requires Mg(2+) as cofactor.

It carries out the reaction a ribonucleoside 5'-triphosphate + H2O = a ribonucleoside 5'-diphosphate + phosphate + H(+). The enzyme catalyses a ribonucleoside 5'-diphosphate + H2O = a ribonucleoside 5'-phosphate + phosphate + H(+). Functionally, has nucleoside phosphatase activity towards nucleoside triphosphates and nucleoside diphosphates. In Listeria monocytogenes serotype 4b (strain CLIP80459), this protein is Nucleoside triphosphate/diphosphate phosphatase.